We begin with the raw amino-acid sequence, 360 residues long: Peptide chain release factor 1 (360 aa).

Gln235 bears the N5-methylglutamine mark.

It belongs to the prokaryotic/mitochondrial release factor family. In terms of processing, methylated by PrmC. Methylation increases the termination efficiency of RF1.

The protein localises to the cytoplasm. In terms of biological role, peptide chain release factor 1 directs the termination of translation in response to the peptide chain termination codons UAG and UAA. This Burkholderia ambifaria (strain MC40-6) protein is Peptide chain release factor 1.